We begin with the raw amino-acid sequence, 309 residues long: NmrA-like family domain-containing protein 1 (309 aa).

NADP(+)-binding positions include glycine 11–glutamine 16, arginine 37–glutamine 41, aspartate 58–glutamine 59, threonine 79–tyrosine 81, lysine 102, lysine 143, and tyrosine 165–asparagine 168. The segment at proline 163–serine 199 is interaction with ASS1.

It belongs to the NmrA-type oxidoreductase family. Homodimer. Interacts with ASS1. Interaction is enhanced by low NADPH/NADP(+) ratios, which results in inhibition of ASS1 activity.

It localises to the cytoplasm. The protein resides in the perinuclear region. Its subcellular location is the nucleus. In terms of biological role, redox sensor protein. Undergoes restructuring and subcellular redistribution in response to changes in intracellular NADPH/NADP(+) levels. At low NADPH concentrations the protein is found mainly as a monomer, and binds argininosuccinate synthase (ASS1), the enzyme involved in nitric oxide synthesis. Association with ASS1 impairs its activity and reduces the production of nitric oxide, which subsecuently prevents apoptosis. Under normal NADPH concentrations, the protein is found as a dimer and hides the binding site for ASS1. The homodimer binds one molecule of NADPH. Has higher affinity for NADPH than for NADP(+). Binding to NADPH is necessary to form a stable dimer. In Mus musculus (Mouse), this protein is NmrA-like family domain-containing protein 1 (Nmral1).